A 563-amino-acid polypeptide reads, in one-letter code: MGLQACLLGLFALILSGKCSYSPEPDQRRTLPPGWVSLGRADPEEELSLTFALRQQNVERLSELVQAVSDPSSPQYGKYLTLENVADLVRPSPLTLHTVQKWLLAAGAQKCHSVITQDFLTCWLSIRQAELLLPGAEFHHYVGGPTETHVVRSPHPYQLPQALAPHVDFVGGLHRFPPTSSLRQRPEPQVTGTVGLHLGVTPSVIRKRYNLTSQDVGSGTSNNSQACAQFLEQYFHDSDLAQFMRLFGGNFAHQASVARVVGQQGRGRAGIEASLDVQYLMSAGANISTWVYSSPGRHEGQEPFLQWLMLLSNESALPHVHTVSYGDDEDSLSSAYIQRVNTELMKAAARGLTLLFASGDSGAGCWSVSGRHQFRPTFPASSPYVTTVGGTSFQEPFLITNEIVDYISGGGFSNVFPRPSYQEEAVTKFLSSSPHLPPSSYFNASGRAYPDVAALSDGYWVVSNRVPIPWVSGTSASTPVFGGILSLINEHRILSGRPPLGFLNPRLYQQHGAGLFDVTRGCHESCLDEEVEGQGFCSGPGWDPVTGWGTPNFPALLKTLLNP.

The N-terminal stretch at methionine 1–cysteine 19 is a signal peptide. Positions serine 20–glycine 195 are cleaved as a propeptide — removed in mature form. Cysteine 111 and cysteine 122 are disulfide-bonded. In terms of domain architecture, Peptidase S53 spans glycine 199–proline 563. 2 N-linked (GlcNAc...) asparagine glycosylation sites follow: asparagine 210 and asparagine 222. Residues glutamate 272 and aspartate 276 each act as charge relay system in the active site. 3 N-linked (GlcNAc...) asparagine glycosylation sites follow: asparagine 286, asparagine 313, and asparagine 443. Cystine bridges form between cysteine 365/cysteine 526 and cysteine 522/cysteine 537. The Charge relay system role is filled by serine 475. Positions 517 and 518 each coordinate Ca(2+). 3 residues coordinate Ca(2+): glycine 539, glycine 541, and aspartate 543.

As to quaternary structure, monomer. Interacts with CLN5. Interacts with CLN3. It depends on Ca(2+) as a cofactor. Activated by autocatalytic proteolytical processing upon acidification. N-glycosylation is required for processing and activity. As to expression, detected in all tissues examined with highest levels in heart and placenta and relatively similar levels in other tissues.

It is found in the lysosome. It localises to the melanosome. It carries out the reaction Release of an N-terminal tripeptide from a polypeptide, but also has endopeptidase activity.. Inhibited by diisopropyl fluorophosphate (DFP). In terms of biological role, lysosomal serine protease with tripeptidyl-peptidase I activity. May act as a non-specific lysosomal peptidase which generates tripeptides from the breakdown products produced by lysosomal proteinases. Requires substrates with an unsubstituted N-terminus. This chain is Tripeptidyl-peptidase 1 (TPP1), found in Homo sapiens (Human).